A 595-amino-acid polypeptide reads, in one-letter code: Pyranose dehydrogenase (595 aa).

The signal sequence occupies residues 1–21 (MARFNARLFSIAILGFQVARS). Asn-95 and Asn-110 each carry an N-linked (GlcNAc...) asparagine glycan. His-123 is subject to Tele-8alpha-FAD histidine. N-linked (GlcNAc...) asparagine glycans are attached at residues Asn-195, Asn-337, Asn-367, Asn-502, and Asn-510. The Proton acceptor role is filled by His-530. Asn-541 is a glycosylation site (N-linked (GlcNAc...) asparagine). Residue His-574 is part of the active site.

Belongs to the GMC oxidoreductase family. Monomer. The cofactor is FAD. In terms of processing, N-glycosylated.

Its subcellular location is the secreted. The enzyme catalyses pyranose + acceptor = pyranos-2-ulose + reduced acceptor.. It catalyses the reaction pyranose + acceptor = pyranos-3-ulose + reduced acceptor.. It carries out the reaction pyranose + acceptor = pyranos-2,3-diulose + reduced acceptor.. The catalysed reaction is a pyranoside + acceptor = a pyranosid-3-ulose + reduced acceptor.. The enzyme catalyses a pyranoside + acceptor = a pyranosid-3,4-diulose + reduced acceptor.. Functionally, catalyzes the single-oxidation or sequential double oxidation reaction of carbohydrates primarily at carbon-2 and/or carbon-3 with the concomitant reduction of the flavin. The enzyme exhibits a broad sugar substrate specificity, oxidizing different aldopyranoses to the corresponding C-1, C-2, C-3 or C-1,2, C-2,3 and C-3,4 (di)dehydro sugars with substrate-specific regioselectivity. Accepts only a narrow range of electron acceptors such as substituted benzoquinones and complexed metal ions and reacts extremely slowly with O(2) as acceptor. May play a role in the natural recycling of plant matter by oxidizing all major monosaccharides in lignocellulose and by reducing quinone compounds or reactive radical species generated during lignin depolymerization. This Agaricus campestris (Field mushroom) protein is Pyranose dehydrogenase.